The primary structure comprises 258 residues: Imidazole glycerol phosphate synthase subunit HisF (258 aa).

Residues Asp-12 and Asp-131 contribute to the active site.

This sequence belongs to the HisA/HisF family. As to quaternary structure, heterodimer of HisH and HisF.

It localises to the cytoplasm. The enzyme catalyses 5-[(5-phospho-1-deoxy-D-ribulos-1-ylimino)methylamino]-1-(5-phospho-beta-D-ribosyl)imidazole-4-carboxamide + L-glutamine = D-erythro-1-(imidazol-4-yl)glycerol 3-phosphate + 5-amino-1-(5-phospho-beta-D-ribosyl)imidazole-4-carboxamide + L-glutamate + H(+). The protein operates within amino-acid biosynthesis; L-histidine biosynthesis; L-histidine from 5-phospho-alpha-D-ribose 1-diphosphate: step 5/9. Functionally, IGPS catalyzes the conversion of PRFAR and glutamine to IGP, AICAR and glutamate. The HisF subunit catalyzes the cyclization activity that produces IGP and AICAR from PRFAR using the ammonia provided by the HisH subunit. This chain is Imidazole glycerol phosphate synthase subunit HisF, found in Pseudarthrobacter chlorophenolicus (strain ATCC 700700 / DSM 12829 / CIP 107037 / JCM 12360 / KCTC 9906 / NCIMB 13794 / A6) (Arthrobacter chlorophenolicus).